The following is a 73-amino-acid chain: Methionyl-tRNA formyltransferase (73 aa).

This sequence belongs to the Fmt family.

It catalyses the reaction L-methionyl-tRNA(fMet) + (6R)-10-formyltetrahydrofolate = N-formyl-L-methionyl-tRNA(fMet) + (6S)-5,6,7,8-tetrahydrofolate + H(+). Functionally, attaches a formyl group to the free amino group of methionyl-tRNA(fMet). The formyl group appears to play a dual role in the initiator identity of N-formylmethionyl-tRNA by promoting its recognition by IF2 and preventing the misappropriation of this tRNA by the elongation apparatus. This chain is Methionyl-tRNA formyltransferase (fmt), found in Rickettsia rickettsii.